A 198-amino-acid chain; its full sequence is Nucleoid occlusion factor SlmA (198 aa).

In terms of domain architecture, HTH tetR-type spans 9-70 (RNRREEILQA…SLIEFIEDSL (62 aa)). A DNA-binding region (H-T-H motif) is located at residues 33–52 (TTAKLAANVGVSEAALYRHF). A coiled-coil region spans residues 119–144 (DRLQGRINQLFERIEMQLRQVLREKK).

It belongs to the nucleoid occlusion factor SlmA family. As to quaternary structure, homodimer. Interacts with FtsZ.

The protein localises to the cytoplasm. Its subcellular location is the nucleoid. Its function is as follows. Required for nucleoid occlusion (NO) phenomenon, which prevents Z-ring formation and cell division over the nucleoid. Acts as a DNA-associated cell division inhibitor that binds simultaneously chromosomal DNA and FtsZ, and disrupts the assembly of FtsZ polymers. SlmA-DNA-binding sequences (SBS) are dispersed on non-Ter regions of the chromosome, preventing FtsZ polymerization at these regions. The chain is Nucleoid occlusion factor SlmA from Yersinia pseudotuberculosis serotype I (strain IP32953).